The chain runs to 351 residues: LIM/homeobox protein ceh-14 (351 aa).

2 LIM zinc-binding domains span residues Ala-46–Thr-105 and Thr-105–Lys-169. A DNA-binding region (homeobox) is located at residues Asn-180–Lys-239. Over residues Leu-238–Ser-254 the composition is skewed to basic and acidic residues. The interval Leu-238–Pro-268 is disordered. Polar residues predominate over residues Asp-255 to Pro-268.

In terms of assembly, interacts (via LIM zinc-binding domains 1 and 2) with lim-7 (via LID domain). May interact with itself. May interact with homeobox protein ceh-63. Expressed in the anterior AFDL/R sensory neurons and BDUL/R and ALA interneurons, and in PVT, PVQL/R, DVC, PVNL/R, PVWL/R, PVR, PHCL/R, PHAL/R and PHBL/R cells in the tail region.

Its subcellular location is the nucleus. Functionally, probable transcription factor, modulating expression of helix-loop-helix protein mbr-1 and homeobox protein ceh-63, perhaps acting in concert with ceh-63. Binds to a motif including the sequence 5'-CTAAT-3' in regulatory promoter elements. Confers thermosensory function to neurons. Required for correct AFD-mediated thermotaxis. In concert with homeobox protein ttx-1, perhaps as components in a complex, specifies identity of AFD neurons, acting by synergistically regulating receptor-type guanylyl cyclase gcy-8, gcy-18 and other genes. Involved in postembryonic differentiation of the ALA neuron, and regulation of genes that contribute to behavioral quiescence, a sleep-like behavior mediated by ALA. Regulates its own expression and also that of homeodomain ceh-17, together forming an autoregulatory loop in the ALA neuron. Required for initial pathfinding of the ALA axons, but largely dispensable for axon migration. Involved in regulating postembryonic axon maintenance in the ventral nerve cord, acting in concert with LIM homeobox protein lim-6, via modulation of expression of immunoglobulin domain zig genes in the interneuron PVT. Plays a role in controlling the peptidergic identity of the BDU neurons, regulating expression of flp-10, nlp-1, and nlp-15, thereby modulating the harsh touch response. The protein is LIM/homeobox protein ceh-14 (ceh-14) of Caenorhabditis elegans.